The sequence spans 57 residues: Large ribosomal subunit protein uL30 (57 aa).

This sequence belongs to the universal ribosomal protein uL30 family. In terms of assembly, part of the 50S ribosomal subunit.

The protein is Large ribosomal subunit protein uL30 of Acholeplasma laidlawii (strain PG-8A).